Reading from the N-terminus, the 499-residue chain is Pyruvate kinase 2 (499 aa).

Substrate is bound at residue R50. K(+) is bound by residues N52, S54, D84, and T85. An ATP-binding site is contributed by 52 to 55; that stretch reads NFSH. Residue R91 coordinates ATP. Residue E241 participates in Mg(2+) binding. The substrate site is built by G264, D265, and T297. D265 is a binding site for Mg(2+).

This sequence belongs to the pyruvate kinase family. As to quaternary structure, homotetramer. It depends on Mg(2+) as a cofactor. K(+) serves as cofactor.

The catalysed reaction is pyruvate + ATP = phosphoenolpyruvate + ADP + H(+). It functions in the pathway carbohydrate degradation; glycolysis; pyruvate from D-glyceraldehyde 3-phosphate: step 5/5. Activated by fructose 2,6-bisphosphate, activated by the effector in a cooperative manner. This Trypanosoma brucei brucei protein is Pyruvate kinase 2 (PYK2).